The chain runs to 536 residues: CTP synthase (536 aa).

Residues 1–267 (MSKFVFVTGG…CKETLKYLDL (267 aa)) are amidoligase domain. Serine 13 is a binding site for CTP. Serine 13 contributes to the UTP binding site. Residues 14–19 (SIGKGI) and aspartate 71 contribute to the ATP site. Mg(2+)-binding residues include aspartate 71 and glutamate 141. CTP is bound by residues 148–150 (DIE), 188–193 (KTKPTQ), and lysine 224. UTP is bound by residues 188–193 (KTKPTQ) and lysine 224. Residues 292 to 534 (KVALVGKYIE…IKASQDKLTQ (243 aa)) enclose the Glutamine amidotransferase type-1 domain. Glycine 354 contacts L-glutamine. Cysteine 381 (nucleophile; for glutamine hydrolysis) is an active-site residue. L-glutamine contacts are provided by residues 382 to 385 (LGMQ), glutamate 405, and arginine 462. Active-site residues include histidine 507 and glutamate 509.

It belongs to the CTP synthase family. Homotetramer.

It carries out the reaction UTP + L-glutamine + ATP + H2O = CTP + L-glutamate + ADP + phosphate + 2 H(+). The enzyme catalyses L-glutamine + H2O = L-glutamate + NH4(+). The catalysed reaction is UTP + NH4(+) + ATP = CTP + ADP + phosphate + 2 H(+). It participates in pyrimidine metabolism; CTP biosynthesis via de novo pathway; CTP from UDP: step 2/2. With respect to regulation, allosterically activated by GTP, when glutamine is the substrate; GTP has no effect on the reaction when ammonia is the substrate. The allosteric effector GTP functions by stabilizing the protein conformation that binds the tetrahedral intermediate(s) formed during glutamine hydrolysis. Inhibited by the product CTP, via allosteric rather than competitive inhibition. Catalyzes the ATP-dependent amination of UTP to CTP with either L-glutamine or ammonia as the source of nitrogen. Regulates intracellular CTP levels through interactions with the four ribonucleotide triphosphates. This chain is CTP synthase, found in Prochlorococcus marinus (strain AS9601).